Here is a 71-residue protein sequence, read N- to C-terminus: Cruzioseptin-2 (71 aa).

Residues 1-22 (MAFLKKSLFLVLFLGLVSLSIC) form the signal peptide. The propeptide occupies 23–43 (EEEKREEENEEVQEDDDQSEE). The residue at position 68 (glutamine 68) is a Glutamine amide. A propeptide spanning residues 70 to 71 (EQ) is cleaved from the precursor.

In terms of tissue distribution, expressed by the skin glands.

It is found in the secreted. Its function is as follows. Has antimicrobial activity against Gram-negative bacterium E.coli (MIC=26.35 uM), against Gram-positive bacterium S.aureus (MIC=6.59 uM) and against fungus C.albicans (MIC=13.18 uM). At higher concentrations also has a bactericidal and fungicidal effect. Has hemagglutinating activity against horse erythrocytes. This Cruziohyla calcarifer (Splendid leaf frog) protein is Cruzioseptin-2.